Reading from the N-terminus, the 502-residue chain is MQSLARLSRTSLVQKGLVPQTIKNYSSVSQAEIDNEPRFLECFKTFFDKAAGLTNLKPGVLNNMKECNVALRVEFPIKNEHGDVDIIAGYRAQHSHHRLPCKGGIRFSEEVDLQEVMALASLMTYKCAVVDVPFGGAKGGVRIDPKKYTVAQREKITRAYTLLLCQKNFIGPGVDVPAPDMGTGEQEMAWIRDTYQAFNTNDVDSMACVTGKPISSGGIRGRTEATGLGVFYGIREFLSYEEVLKKTGLTPGIKGKSIVIQGFGNVGYFAAKFFEQAGAKVIAVAEHNGAVYNADGLNIDALNKYKLQHGTFIDFPGATNIVDSVKALEIPCDILIPAALEKQIHIGNVADIQAKLIGEAANGPMTPRADQILLNRGHVIIPDLLLNAGGVTVSYFEWLKNLSHVRFGRLNKKWEESSKKLLLEFVESTVNKKLSEAERSLIIHGADEIDIVRSGLEDTMQNACAETRKTANEKNTDYRSAALYNAIMKIKAVYESSGNVFS.

NAD(+) is bound at residue 96–98 (HHR). Substrate is bound by residues K102 and K126. D131 lines the NAD(+) pocket. Residue K138 is part of the active site. Position 394 (S394) interacts with substrate.

The protein belongs to the Glu/Leu/Phe/Val dehydrogenases family. Homohexamer.

The protein resides in the mitochondrion matrix. It carries out the reaction L-glutamate + NAD(+) + H2O = 2-oxoglutarate + NH4(+) + NADH + H(+). The enzyme catalyses L-glutamate + NADP(+) + H2O = 2-oxoglutarate + NH4(+) + NADPH + H(+). Subject to allosteric regulation. Activated by AMP and ADP. This Dictyostelium discoideum (Social amoeba) protein is Glutamate dehydrogenase, mitochondrial (gluD).